We begin with the raw amino-acid sequence, 447 residues long: Trigger factor (447 aa).

The 86-residue stretch at 164-249 (GNQVTFDFEG…VKLVEKSKLP (86 aa)) folds into the PPIase FKBP-type domain.

It belongs to the FKBP-type PPIase family. Tig subfamily.

It localises to the cytoplasm. It carries out the reaction [protein]-peptidylproline (omega=180) = [protein]-peptidylproline (omega=0). Functionally, involved in protein export. Acts as a chaperone by maintaining the newly synthesized protein in an open conformation. Functions as a peptidyl-prolyl cis-trans isomerase. The chain is Trigger factor from Psychrobacter arcticus (strain DSM 17307 / VKM B-2377 / 273-4).